The following is a 781-amino-acid chain: Translation initiation factor IF-2 (781 aa).

The disordered stretch occupies residues 44-195 (RQLDNAVDGT…TPPKPKELPE (152 aa)). Residues 53–65 (TNKKAEAPKKETT) show a composition bias toward basic and acidic residues. Residues 66 to 81 (SNENGNSKGPNKPNMT) are compositionally biased toward polar residues. Residues 82 to 93 (NSNEKSNKPNKP) are compositionally biased toward low complexity. Positions 115 to 126 (KPANTGNQTQAS) are enriched in polar residues. Over residues 127–169 (GNQQAGGQKRNNNNNSNRPGGGNPNRPGGNNRPNRGGNFNNKG) the composition is skewed to low complexity. The tr-type G domain occupies 282 to 451 (ERPPVVTIMG…LLVSEVEELK (170 aa)). The tract at residues 291–298 (GHVDHGKT) is G1. 291 to 298 (GHVDHGKT) contributes to the GTP binding site. The tract at residues 316 to 320 (GITQH) is G2. The interval 337–340 (DTPG) is G3. Residues 337–341 (DTPGH) and 391–394 (NKID) each bind GTP. The interval 391–394 (NKID) is G4. The interval 427–429 (SAK) is G5.

It belongs to the TRAFAC class translation factor GTPase superfamily. Classic translation factor GTPase family. IF-2 subfamily.

Its subcellular location is the cytoplasm. Functionally, one of the essential components for the initiation of protein synthesis. Protects formylmethionyl-tRNA from spontaneous hydrolysis and promotes its binding to the 30S ribosomal subunits. Also involved in the hydrolysis of GTP during the formation of the 70S ribosomal complex. This Listeria monocytogenes serotype 4a (strain HCC23) protein is Translation initiation factor IF-2.